We begin with the raw amino-acid sequence, 434 residues long: D-amino acid dehydrogenase (434 aa).

An FAD-binding site is contributed by 3–17; that stretch reads VVILGSGVVGVASAW.

It belongs to the DadA oxidoreductase family. It depends on FAD as a cofactor.

The catalysed reaction is a D-alpha-amino acid + A + H2O = a 2-oxocarboxylate + AH2 + NH4(+). It functions in the pathway amino-acid degradation; D-alanine degradation; NH(3) and pyruvate from D-alanine: step 1/1. Oxidative deamination of D-amino acids. The sequence is that of D-amino acid dehydrogenase from Yersinia enterocolitica serotype O:8 / biotype 1B (strain NCTC 13174 / 8081).